We begin with the raw amino-acid sequence, 313 residues long: UPF0761 membrane protein VV0203 (313 aa).

Transmembrane regions (helical) follow at residues 41–61 (YLAY…LSIL), 104–124 (MTAV…SNID), 139–159 (AVFS…LVGA), 185–205 (LLRW…YLLV), 215–235 (AVVG…GFAA), and 249–269 (ALAA…IVLI). The disordered stretch occupies residues 293-313 (LPNNDTELEKDTQRDRFDSES). Basic and acidic residues predominate over residues 299-313 (ELEKDTQRDRFDSES).

Belongs to the UPF0761 family.

The protein localises to the cell inner membrane. The protein is UPF0761 membrane protein VV0203 of Vibrio vulnificus (strain YJ016).